We begin with the raw amino-acid sequence, 469 residues long: Acetyl-CoA decarbonylase/synthase complex subunit beta 2 (469 aa).

C187, C190, C276, and C278 together coordinate [Ni-Fe-S] cluster.

Belongs to the CdhC family. As to quaternary structure, monomer. The ACDS complex is made up of alpha, epsilon, beta, gamma and delta chains with a probable stoichiometry of (alpha(2)epsilon(2))(4)-beta(8)-(gamma(1)delta(1))(8) (Potential). It depends on [Ni-Fe-S] cluster as a cofactor.

It catalyses the reaction Co(I)-[corrinoid Fe-S protein] + acetyl-CoA + H(+) = methyl-Co(III)-[corrinoid Fe-S protein] + CO + CoA. Its function is as follows. Part of a complex that catalyzes the reversible cleavage of acetyl-CoA, allowing autotrophic growth from CO(2). The alpha-epsilon complex generates CO from CO(2), while the beta subunit (this protein) combines the CO with CoA and a methyl group to form acetyl-CoA. The methyl group, which is incorporated into acetyl-CoA, is transferred to the beta subunit by a corrinoid iron-sulfur protein (the gamma-delta complex). This is Acetyl-CoA decarbonylase/synthase complex subunit beta 2 (cdhC2) from Methanocaldococcus jannaschii (strain ATCC 43067 / DSM 2661 / JAL-1 / JCM 10045 / NBRC 100440) (Methanococcus jannaschii).